Reading from the N-terminus, the 1104-residue chain is Lon protease homolog, mitochondrial (1104 aa).

A mitochondrion-targeting transit peptide spans 1–58 (MLPLRAFARLAQRPRLSRPTQLARSSLPRPSPSRPAAHYLALAPAPSTRFLHSSPPVL). Disordered regions lie at residues 8 to 144 (ARLA…KEVA) and 275 to 295 (EGSQ…SEVP). Residues 22-46 (LARSSLPRPSPSRPAAHYLALAPAP) show a composition bias toward low complexity. Basic and acidic residues predominate over residues 80-103 (KQDDQVEKPLPDAESSKSAEERAK). Positions 104 to 128 (SQSSKPDIKASSSDSVSSSAPAPGS) are enriched in low complexity. The segment covering 129 to 139 (ADGGSPPGAGG) has biased composition (gly residues). The Lon N-terminal domain maps to 155 to 444 (VLAIPITHRP…RALVLLKKEL (290 aa)). Residues 281–291 (AKGEGEVKSFE) show a composition bias toward basic and acidic residues. 597–604 (GPPGVGKT) contributes to the ATP binding site. A Lon proteolytic domain is found at 895–1082 (SPPAGVSTGL…RQVLHEAFRG (188 aa)). Catalysis depends on residues S987 and K1030.

The protein belongs to the peptidase S16 family. Homohexamer or homoheptamer. Organized in a ring with a central cavity.

Its subcellular location is the mitochondrion matrix. The enzyme catalyses Hydrolysis of proteins in presence of ATP.. Functionally, ATP-dependent serine protease that mediates the selective degradation of misfolded, unassembled or oxidatively damaged polypeptides as well as certain short-lived regulatory proteins in the mitochondrial matrix. May also have a chaperone function in the assembly of inner membrane protein complexes. Participates in the regulation of mitochondrial gene expression and in the maintenance of the integrity of the mitochondrial genome. Binds to mitochondrial DNA in a site-specific manner. This is Lon protease homolog, mitochondrial from Cryptococcus neoformans var. neoformans serotype D (strain JEC21 / ATCC MYA-565) (Filobasidiella neoformans).